We begin with the raw amino-acid sequence, 816 residues long: Acyl-homoserine lactone acylase QuiP (816 aa).

Positions 1–33 are cleaved as a signal peptide; it reads MASPALSHFLPRFGVAAAVAGVLSLTGCQTWNA. The active-site Nucleophile is the Ser-262.

Belongs to the peptidase S45 family. Heterodimer of an alpha subunit and a beta subunit processed from the same precursor.

It is found in the periplasm. The catalysed reaction is an N-acyl-L-homoserine lactone + H2O = L-homoserine lactone + a carboxylate. Functionally, catalyzes the deacylation of acyl-homoserine lactone (AHL or acyl-HSL), releasing homoserine lactone (HSL) and the corresponding fatty acid. Possesses a specificity for the degradation of long-chain acyl-HSLs (side chains of seven or more carbons in length). This is Acyl-homoserine lactone acylase QuiP (quiP) from Pseudomonas fluorescens (strain Pf0-1).